We begin with the raw amino-acid sequence, 589 residues long: Protein MICRORCHIDIA 3 (589 aa).

Residues 1 to 33 (MAPESKNAGVSVVVNLDSDSDSDNDDGVGGRGA) form a disordered region. Residues 542–589 (MRCEEYVKKETELEQTVSNLAKELEETKSKCARLALLVDAKRREMQQV) are a coiled coil.

The protein belongs to the MORC ATPase protein family. As to quaternary structure, homodimer and heterodimer. Component of an RNA-directed DNA methylation (RdDM) complex. Mg(2+) serves as cofactor. Requires Mn(2+) as cofactor.

It localises to the nucleus. Functionally, exhibits ATPase activity. Binds DNA/RNA in a non-specific manner and exhibits endonuclease activity. Probably involved in DNA repair. Involved in RNA-directed DNA methylation (RdDM) as a component of the RdDM machinery and required for gene silencing. May also be involved in the regulation of chromatin architecture to maintain gene silencing. The polypeptide is Protein MICRORCHIDIA 3 (Arabidopsis thaliana (Mouse-ear cress)).